A 607-amino-acid chain; its full sequence is Glutamine--fructose-6-phosphate aminotransferase [isomerizing] (607 aa).

Catalysis depends on Cys2, which acts as the Nucleophile; for GATase activity. Residues 2 to 217 enclose the Glutamine amidotransferase type-2 domain; it reads CGIIGILGKK…DGDWAVLTRE (216 aa). 2 SIS domains span residues 277 to 422 and 455 to 597; these read TVRS…QRGS and ICRD…VDQP. The active-site For Fru-6P isomerization activity is Lys602.

Homodimer.

It is found in the cytoplasm. It carries out the reaction D-fructose 6-phosphate + L-glutamine = D-glucosamine 6-phosphate + L-glutamate. Functionally, catalyzes the first step in hexosamine metabolism, converting fructose-6P into glucosamine-6P using glutamine as a nitrogen source. This Bartonella quintana (strain Toulouse) (Rochalimaea quintana) protein is Glutamine--fructose-6-phosphate aminotransferase [isomerizing].